Reading from the N-terminus, the 714-residue chain is Fatty acid oxidation complex subunit alpha (714 aa).

The segment at 1-190 (MEMASAFTLN…KLGLVDDVVP (190 aa)) is enoyl-CoA hydratase. Positions 306–714 (APLNSVGILG…FWKTTATDLQ (409 aa)) are 3-hydroxyacyl-CoA dehydrogenase.

It in the N-terminal section; belongs to the enoyl-CoA hydratase/isomerase family. In the central section; belongs to the 3-hydroxyacyl-CoA dehydrogenase family. In terms of assembly, heterotetramer of two alpha chains (FadJ) and two beta chains (FadI).

The protein resides in the cytoplasm. It catalyses the reaction a (3S)-3-hydroxyacyl-CoA = a (2E)-enoyl-CoA + H2O. The enzyme catalyses a 4-saturated-(3S)-3-hydroxyacyl-CoA = a (3E)-enoyl-CoA + H2O. It carries out the reaction a (3S)-3-hydroxyacyl-CoA + NAD(+) = a 3-oxoacyl-CoA + NADH + H(+). The catalysed reaction is (3S)-3-hydroxybutanoyl-CoA = (3R)-3-hydroxybutanoyl-CoA. Its pathway is lipid metabolism; fatty acid beta-oxidation. Its function is as follows. Catalyzes the formation of a hydroxyacyl-CoA by addition of water on enoyl-CoA. Also exhibits 3-hydroxyacyl-CoA epimerase and 3-hydroxyacyl-CoA dehydrogenase activities. The chain is Fatty acid oxidation complex subunit alpha from Shigella flexneri.